The primary structure comprises 199 residues: Recombination protein RecR (199 aa).

The C4-type zinc-finger motif lies at 57 to 72 (CNLCNNFSEQEICPLC). The 96-residue stretch at 80 to 175 (TLLCIVEMPS…QVSRIARGLP (96 aa)) folds into the Toprim domain.

This sequence belongs to the RecR family.

Functionally, may play a role in DNA repair. It seems to be involved in an RecBC-independent recombinational process of DNA repair. It may act with RecF and RecO. The chain is Recombination protein RecR from Methylobacillus flagellatus (strain ATCC 51484 / DSM 6875 / VKM B-1610 / KT).